The sequence spans 250 residues: Ubiquinone/menaquinone biosynthesis C-methyltransferase UbiE (250 aa).

Residues T73, D94, and 122-123 contribute to the S-adenosyl-L-methionine site; that span reads DA.

Belongs to the class I-like SAM-binding methyltransferase superfamily. MenG/UbiE family.

It catalyses the reaction a 2-demethylmenaquinol + S-adenosyl-L-methionine = a menaquinol + S-adenosyl-L-homocysteine + H(+). The enzyme catalyses a 2-methoxy-6-(all-trans-polyprenyl)benzene-1,4-diol + S-adenosyl-L-methionine = a 5-methoxy-2-methyl-3-(all-trans-polyprenyl)benzene-1,4-diol + S-adenosyl-L-homocysteine + H(+). Its pathway is quinol/quinone metabolism; menaquinone biosynthesis; menaquinol from 1,4-dihydroxy-2-naphthoate: step 2/2. It participates in cofactor biosynthesis; ubiquinone biosynthesis. Methyltransferase required for the conversion of demethylmenaquinol (DMKH2) to menaquinol (MKH2) and the conversion of 2-polyprenyl-6-methoxy-1,4-benzoquinol (DDMQH2) to 2-polyprenyl-3-methyl-6-methoxy-1,4-benzoquinol (DMQH2). This Coxiella burnetii (strain CbuK_Q154) (Coxiella burnetii (strain Q154)) protein is Ubiquinone/menaquinone biosynthesis C-methyltransferase UbiE.